Consider the following 96-residue polypeptide: DNA/RNA-binding protein Alba (96 aa).

The protein belongs to the histone-like Alba family.

The protein localises to the cytoplasm. It localises to the chromosome. Its function is as follows. Binds double-stranded DNA tightly but without sequence specificity. Involved in DNA compaction. The polypeptide is DNA/RNA-binding protein Alba (Methanocella arvoryzae (strain DSM 22066 / NBRC 105507 / MRE50)).